The following is a 254-amino-acid chain: tRNA (guanine-N(7)-)-methyltransferase (254 aa).

Residues glutamate 82, glutamate 107, aspartate 134, and aspartate 157 each coordinate S-adenosyl-L-methionine. Residue aspartate 157 is part of the active site. Substrate-binding positions include lysine 161, aspartate 193, and 233–236; that span reads TKFE.

This sequence belongs to the class I-like SAM-binding methyltransferase superfamily. TrmB family.

The enzyme catalyses guanosine(46) in tRNA + S-adenosyl-L-methionine = N(7)-methylguanosine(46) in tRNA + S-adenosyl-L-homocysteine. It functions in the pathway tRNA modification; N(7)-methylguanine-tRNA biosynthesis. Catalyzes the formation of N(7)-methylguanine at position 46 (m7G46) in tRNA. This chain is tRNA (guanine-N(7)-)-methyltransferase, found in Corynebacterium jeikeium (strain K411).